We begin with the raw amino-acid sequence, 190 residues long: Putative 3-methyladenine DNA glycosylase (190 aa).

It belongs to the DNA glycosylase MPG family.

The chain is Putative 3-methyladenine DNA glycosylase from Deinococcus radiodurans (strain ATCC 13939 / DSM 20539 / JCM 16871 / CCUG 27074 / LMG 4051 / NBRC 15346 / NCIMB 9279 / VKM B-1422 / R1).